The chain runs to 1547 residues: Tubby-related protein 4 (1547 aa).

3 WD repeats span residues 80–119 (GHNS…WSVE), 123–162 (DRGA…HWSS), and 165–204 (NLES…LAHV). In terms of domain architecture, SOCS box spans 364–414 (ALYVVRVEHRVSSLQLLCQQAIASTLREDKDVNKLTLPPRLCSYLSTAFIP). The tract at residues 530-580 (SPKISRSSKSPKLPRISIEARKSPKLPRAAQEISRSPRLPMRKPSMGSPSL) is disordered. The span at 533-546 (ISRSSKSPKLPRIS) shows a compositional bias: low complexity. Position 577 is a phosphoserine (Ser577). Residues Arg949 and Arg954 each carry the asymmetric dimethylarginine modification. Phosphoserine is present on residues Ser1347 and Ser1378. Positions 1374–1414 (SLISSPRLGREKKKVKSQKDQLKSKKLNKTNEFQDSSESEP) are disordered. The interval 1436-1547 (SKRSLRTASE…ALANVTQRLK (112 aa)) is TUB.

It belongs to the TUB family.

Its subcellular location is the cytoplasm. It functions in the pathway protein modification; protein ubiquitination. May be a substrate-recognition component of a SCF-like ECS (Elongin-Cullin-SOCS-box protein) E3 ubiquitin ligase complex which mediates the ubiquitination and subsequent proteasomal degradation of target proteins. The protein is Tubby-related protein 4 (Tulp4) of Mus musculus (Mouse).